A 243-amino-acid chain; its full sequence is UMP-CMP kinase 1 (243 aa).

29 to 34 (GSGKGT) provides a ligand contact to ATP. Residues 49–78 (SAGDLLREEAKYDTEQGTMIKNLMNEGKLV) form an NMP region. Residues arginine 55, 76-78 (KLV), and 103-106 (GFPR) each bind a ribonucleoside 5'-phosphate. Residue asparagine 110 participates in CMP binding. An LID region spans residues 141–149 (NRNQGRDDD). Arginine 142 contacts ATP. Residues arginine 146 and arginine 157 each coordinate a ribonucleoside 5'-phosphate. Arginine 185 contributes to the ATP binding site.

Belongs to the adenylate kinase family. UMP-CMP kinase subfamily. In terms of assembly, monomer. Mg(2+) serves as cofactor.

It localises to the cytoplasm. It is found in the nucleus. It catalyses the reaction UMP + ATP = UDP + ADP. It carries out the reaction CMP + ATP = CDP + ADP. The catalysed reaction is dCMP + ATP = dCDP + ADP. Its function is as follows. Catalyzes the phosphorylation of pyrimidine nucleoside monophosphates at the expense of ATP. Plays an important role in de novo pyrimidine nucleotide biosynthesis. Has preference for UMP and CMP as phosphate acceptors. The chain is UMP-CMP kinase 1 from Oryza sativa subsp. japonica (Rice).